A 265-amino-acid chain; its full sequence is Ubiquinone biosynthesis protein COQ4 homolog, mitochondrial (265 aa).

The transit peptide at 1 to 30 directs the protein to the mitochondrion; sequence MATLLRPVLRRLCGLPGLQRPAAEMPLRAR. Residue S108 is modified to Phosphoserine. Zn(2+) contacts are provided by H163, D164, H167, and E179.

Belongs to the COQ4 family. In terms of assembly, component of a multi-subunit COQ enzyme complex, composed of at least COQ3, COQ4, COQ5, COQ6, COQ7 and COQ9. The cofactor is Zn(2+). Expressed ubiquitously, but at high levels in liver, lung and pancreas.

The protein resides in the mitochondrion inner membrane. The enzyme catalyses 4-hydroxy-3-methoxy-5-(all-trans-decaprenyl)benzoate + H(+) = 2-methoxy-6-(all-trans-decaprenyl)phenol + CO2. The protein operates within cofactor biosynthesis; ubiquinone biosynthesis. Lyase that catalyzes the C1-decarboxylation of 4-hydroxy-3-methoxy-5-(all-trans-decaprenyl)benzoic acid into 2-methoxy-6-(all-trans-decaprenyl)phenol during ubiquinone biosynthesis. The sequence is that of Ubiquinone biosynthesis protein COQ4 homolog, mitochondrial from Homo sapiens (Human).